The following is a 430-amino-acid chain: Zinc finger CCCH domain-containing protein 48 (430 aa).

Disordered stretches follow at residues Met1 to Ser27 and Gly56 to Asn90. Residues Asp26–Leu52 form a C3H1-type 1 zinc finger. The C3H1-type 2 zinc finger occupies Thr102–Ser129. WD repeat units follow at residues Gly142–Asn183, Gly221–Asp258, Gly265–Thr304, His306–Val342, Thr345–Lys389, and Leu391–Leu429.

This Arabidopsis thaliana (Mouse-ear cress) protein is Zinc finger CCCH domain-containing protein 48 (ZFWD1).